Here is a 265-residue protein sequence, read N- to C-terminus: Undecaprenyl-diphosphatase (265 aa).

7 consecutive transmembrane segments (helical) span residues 38-58, 80-100, 107-127, 135-155, 175-195, 213-233, and 244-264; these read SDMFNIVIQAGAILAVTIIYW, LIVAFLITAILGLVVKKLGFE, PIAWALIIGGIWMIFAEWAAA, ITWLVAILVGIAQIVAGVFPG, AAATEFAFLVGIPTMYAASGY, ALAIAFIVSTIVAFIAVKWLL, and FAIYRIILGVLLLGMATSGLI.

It belongs to the UppP family.

It is found in the cell inner membrane. It carries out the reaction di-trans,octa-cis-undecaprenyl diphosphate + H2O = di-trans,octa-cis-undecaprenyl phosphate + phosphate + H(+). Catalyzes the dephosphorylation of undecaprenyl diphosphate (UPP). Confers resistance to bacitracin. The sequence is that of Undecaprenyl-diphosphatase from Rhizobium etli (strain CIAT 652).